A 243-amino-acid chain; its full sequence is Peptidyl-tRNA hydrolase (243 aa).

Tyr14 contributes to the tRNA binding site. His19 functions as the Proton acceptor in the catalytic mechanism. TRNA is bound by residues Phe64, Asn66, and Asn112. The segment at 188–243 is disordered; it reads GGKAEEEKPRKDNKTTEKKPAGQSHIHQARNHNQPKVLTTGPMADILKKMFGNKGE. Over residues 190–207 the composition is skewed to basic and acidic residues; sequence KAEEEKPRKDNKTTEKKP.

The protein belongs to the PTH family. Monomer.

The protein localises to the cytoplasm. The catalysed reaction is an N-acyl-L-alpha-aminoacyl-tRNA + H2O = an N-acyl-L-amino acid + a tRNA + H(+). In terms of biological role, hydrolyzes ribosome-free peptidyl-tRNAs (with 1 or more amino acids incorporated), which drop off the ribosome during protein synthesis, or as a result of ribosome stalling. Its function is as follows. Catalyzes the release of premature peptidyl moieties from peptidyl-tRNA molecules trapped in stalled 50S ribosomal subunits, and thus maintains levels of free tRNAs and 50S ribosomes. The protein is Peptidyl-tRNA hydrolase of Rhizobium leguminosarum bv. trifolii (strain WSM2304).